The chain runs to 157 residues: Small ribosomal subunit protein uS7 (157 aa).

The protein belongs to the universal ribosomal protein uS7 family. Part of the 30S ribosomal subunit. Contacts proteins S9 and S11.

In terms of biological role, one of the primary rRNA binding proteins, it binds directly to 16S rRNA where it nucleates assembly of the head domain of the 30S subunit. Is located at the subunit interface close to the decoding center, probably blocks exit of the E-site tRNA. This is Small ribosomal subunit protein uS7 from Psychrobacter sp. (strain PRwf-1).